Consider the following 293-residue polypeptide: Acetyl-coenzyme A carboxylase carboxyl transferase subunit beta (293 aa).

The region spanning 29–293 (LWSKCPECGL…GCRPMEITSA (265 aa)) is the CoA carboxyltransferase N-terminal domain. Residues C33, C36, C52, and C55 each coordinate Zn(2+). The segment at 33 to 55 (CPECGLVVYVKDLKGNASVCAGC) adopts a C4-type zinc-finger fold.

Belongs to the AccD/PCCB family. In terms of assembly, acetyl-CoA carboxylase is a heterohexamer composed of biotin carboxyl carrier protein (AccB), biotin carboxylase (AccC) and two subunits each of ACCase subunit alpha (AccA) and ACCase subunit beta (AccD). Zn(2+) is required as a cofactor.

Its subcellular location is the cytoplasm. It carries out the reaction N(6)-carboxybiotinyl-L-lysyl-[protein] + acetyl-CoA = N(6)-biotinyl-L-lysyl-[protein] + malonyl-CoA. The protein operates within lipid metabolism; malonyl-CoA biosynthesis; malonyl-CoA from acetyl-CoA: step 1/1. In terms of biological role, component of the acetyl coenzyme A carboxylase (ACC) complex. Biotin carboxylase (BC) catalyzes the carboxylation of biotin on its carrier protein (BCCP) and then the CO(2) group is transferred by the transcarboxylase to acetyl-CoA to form malonyl-CoA. This is Acetyl-coenzyme A carboxylase carboxyl transferase subunit beta from Parasynechococcus marenigrum (strain WH8102).